The sequence spans 136 residues: Ig heavy chain V-A2 region P-MU-3 (136 aa).

Positions 1 to 19 (METGLRWLLLVAVLKGVQC) are cleaved as a signal peptide. Pyrrolidone carboxylic acid is present on Gln-20. The Ig-like domain maps to 20 to 127 (QSVKESEGGL…ENEFFNAIWG (108 aa)).

This Oryctolagus cuniculus (Rabbit) protein is Ig heavy chain V-A2 region P-MU-3.